Here is a 396-residue protein sequence, read N- to C-terminus: Non-homologous end joining protein Ku (396 aa).

Residues 9–189 (ISFGLVSIPV…DVAVRPQELS (181 aa)) form the Ku domain. A compositionally biased stretch (low complexity) spans 278–288 (DGDAGPAAAGV). The disordered stretch occupies residues 278-396 (DGDAGPAAAG…SKTPPTRRSA (119 aa)). Residues 294-312 (DDKASDDKASDDKASDGRR) are compositionally biased toward basic and acidic residues. Polar residues predominate over residues 315 to 336 (RTSSVKGASSAPGTRSTARKTP). The segment covering 337 to 396 (SSTRSTAKTNAATKTPPAKTSAAKASAAKTSAAKATSSRTAPKTAPRTPTSKTPPTRRSA) has biased composition (low complexity).

The protein belongs to the prokaryotic Ku family. Homodimer. Interacts with LigD.

With LigD forms a non-homologous end joining (NHEJ) DNA repair enzyme, which repairs dsDNA breaks with reduced fidelity. Binds linear dsDNA with 5'- and 3'- overhangs but not closed circular dsDNA nor ssDNA. Recruits and stimulates the ligase activity of LigD. This is Non-homologous end joining protein Ku from Frankia casuarinae (strain DSM 45818 / CECT 9043 / HFP020203 / CcI3).